Consider the following 131-residue polypeptide: Fumarate reductase subunit C (131 aa).

2 helical membrane-spanning segments follow: residues 60-80 and 110-130; these read FVGFLQNPVVLILNLIVLAAA and IKGLWAVTAVVTAVVLFVALF.

It belongs to the FrdC family. As to quaternary structure, part of an enzyme complex containing four subunits: a flavoprotein (FrdA), an iron-sulfur protein (FrdB), and two hydrophobic anchor proteins (FrdC and FrdD).

Its subcellular location is the cell inner membrane. Its function is as follows. Two distinct, membrane-bound, FAD-containing enzymes are responsible for the catalysis of fumarate and succinate interconversion; fumarate reductase is used in anaerobic growth, and succinate dehydrogenase is used in aerobic growth. Anchors the catalytic components of the fumarate reductase complex to the cell inner membrane, binds quinones. This chain is Fumarate reductase subunit C, found in Enterobacter sp. (strain 638).